Reading from the N-terminus, the 150-residue chain is Cytochrome c oxidase subunit 5A, mitochondrial (150 aa).

Residues 1 to 41 constitute a mitochondrion transit peptide; sequence MLGAALRRCAVAATTWAGPRGLLHSARTPGPAAAIQSVRCY. The short motif at 2-20 is the SIFI-degron element; the sequence is LGAALRRCAVAATTWAGPR. An N6-acetyllysine mark is found at K87 and K113. The residue at position 141 (T141) is a Phosphothreonine.

Belongs to the cytochrome c oxidase subunit 5A family. Component of the cytochrome c oxidase (complex IV, CIV), a multisubunit enzyme composed of 14 subunits. The complex is composed of a catalytic core of 3 subunits MT-CO1, MT-CO2 and MT-CO3, encoded in the mitochondrial DNA, and 11 supernumerary subunits COX4I, COX5A, COX5B, COX6A, COX6B, COX6C, COX7A, COX7B, COX7C, COX8 and NDUFA4, which are encoded in the nuclear genome. The complex exists as a monomer or a dimer and forms supercomplexes (SCs) in the inner mitochondrial membrane with NADH-ubiquinone oxidoreductase (complex I, CI) and ubiquinol-cytochrome c oxidoreductase (cytochrome b-c1 complex, complex III, CIII), resulting in different assemblies (supercomplex SCI(1)III(2)IV(1) and megacomplex MCI(2)III(2)IV(2)). Interacts with AFG1L. Interacts with RAB5IF. In terms of processing, in response to mitochondrial stress, the precursor protein is ubiquitinated by the SIFI complex in the cytoplasm before mitochondrial import, leading to its degradation. Within the SIFI complex, UBR4 initiates ubiquitin chain that are further elongated or branched by KCMF1.

The protein resides in the mitochondrion inner membrane. Its pathway is energy metabolism; oxidative phosphorylation. Functionally, component of the cytochrome c oxidase, the last enzyme in the mitochondrial electron transport chain which drives oxidative phosphorylation. The respiratory chain contains 3 multisubunit complexes succinate dehydrogenase (complex II, CII), ubiquinol-cytochrome c oxidoreductase (cytochrome b-c1 complex, complex III, CIII) and cytochrome c oxidase (complex IV, CIV), that cooperate to transfer electrons derived from NADH and succinate to molecular oxygen, creating an electrochemical gradient over the inner membrane that drives transmembrane transport and the ATP synthase. Cytochrome c oxidase is the component of the respiratory chain that catalyzes the reduction of oxygen to water. Electrons originating from reduced cytochrome c in the intermembrane space (IMS) are transferred via the dinuclear copper A center (CU(A)) of subunit 2 and heme A of subunit 1 to the active site in subunit 1, a binuclear center (BNC) formed by heme A3 and copper B (CU(B)). The BNC reduces molecular oxygen to 2 water molecules using 4 electrons from cytochrome c in the IMS and 4 protons from the mitochondrial matrix. The sequence is that of Cytochrome c oxidase subunit 5A, mitochondrial (COX5A) from Macaca mulatta (Rhesus macaque).